Reading from the N-terminus, the 295-residue chain is Sulfotransferase 1A1 (295 aa).

3'-phosphoadenylyl sulfate is bound at residue 48 to 53 (KSGTTW). Substrate is bound at residue 106 to 108 (KTH). The active-site Proton acceptor is the histidine 108. Residues arginine 130, serine 138, tyrosine 193, 227 to 232 (TSFKEM), and 255 to 259 (FMRKG) contribute to the 3'-phosphoadenylyl sulfate site. Position 138 is a phosphoserine (serine 138).

It belongs to the sulfotransferase 1 family. Homodimer. Liver, lung, adrenal, brain, platelets and skin.

It is found in the cytoplasm. The enzyme catalyses a phenol + 3'-phosphoadenylyl sulfate = an aryl sulfate + adenosine 3',5'-bisphosphate + H(+). It catalyses the reaction 17beta-estradiol + 3'-phosphoadenylyl sulfate = 17beta-estradiol 3-sulfate + adenosine 3',5'-bisphosphate + H(+). It carries out the reaction 4-ethylphenol + 3'-phosphoadenylyl sulfate = 4-ethylphenyl sulfate + adenosine 3',5'-bisphosphate + H(+). The catalysed reaction is 4-nitrophenol + 3'-phosphoadenylyl sulfate = 4-nitrophenyl sulfate + adenosine 3',5'-bisphosphate. The enzyme catalyses dopamine + 3'-phosphoadenylyl sulfate = dopamine 3-O-sulfate + adenosine 3',5'-bisphosphate + H(+). It catalyses the reaction dopamine + 3'-phosphoadenylyl sulfate = dopamine 4-O-sulfate + adenosine 3',5'-bisphosphate + H(+). It carries out the reaction 3,3',5-triiodo-L-thyronine + 3'-phosphoadenylyl sulfate = 3,3',5-triiodo-L-thyronine sulfate + adenosine 3',5'-bisphosphate + H(+). The catalysed reaction is 3,3',5'-triiodo-L-thyronine + 3'-phosphoadenylyl sulfate = 3,3',5'-triiodo-L-thyronine sulfate + adenosine 3',5'-bisphosphate + H(+). The enzyme catalyses 3,3'-diiodo-L-thyronine + 3'-phosphoadenylyl sulfate = 3,3'-diiodo-L-thyronine sulfate + adenosine 3',5'-bisphosphate + H(+). It catalyses the reaction L-thyroxine + 3'-phosphoadenylyl sulfate = L-thyroxine sulfate + adenosine 3',5'-bisphosphate + H(+). In terms of biological role, sulfotransferase that utilizes 3'-phospho-5'-adenylyl sulfate (PAPS) as sulfonate donor to catalyze the sulfate conjugation of a wide variety of acceptor molecules bearing a hydroxyl or an amine group. Sulfonation increases the water solubility of most compounds, and therefore their renal excretion, but it can also result in bioactivation to form active metabolites. Displays broad substrate specificity for small phenolic compounds. Plays an important role in the sulfonation of endogenous molecules such as steroid hormones. Mediates the sulfate conjugation of a variety of xenobiotics, including the drugs acetaminophen and minoxidil. Mediates also the metabolic activation of carcinogenic N-hydroxyarylamines leading to highly reactive intermediates capable of forming DNA adducts, potentially resulting in mutagenesis. May play a role in gut microbiota-host metabolic interaction. O-sulfonates 4-ethylphenol (4-EP), a dietary tyrosine-derived metabolite produced by gut bacteria. The product 4-EPS crosses the blood-brain barrier and may negatively regulate oligodendrocyte maturation and myelination, affecting the functional connectivity of different brain regions associated with the limbic system. Catalyzes the sulfate conjugation of dopamine. Catalyzes the sulfation of T4 (L-thyroxine/3,5,3',5'-tetraiodothyronine), T3 (3,5,3'-triiodothyronine), rT3 (3,3',5'-triiodothyronine) and 3,3'-T2 (3,3'-diiodothyronine), with a substrate preference of 3,3'-T2 &gt; rT3 &gt; T3 &gt; T4. The sequence is that of Sulfotransferase 1A1 (SULT1A1) from Homo sapiens (Human).